Reading from the N-terminus, the 379-residue chain is Succinyl-diaminopimelate desuccinylase (379 aa).

Residue His70 participates in Zn(2+) binding. The active site involves Asp72. Asp103 contacts Zn(2+). Glu137 acts as the Proton acceptor in catalysis. Residues Glu138, Glu166, and His352 each coordinate Zn(2+).

This sequence belongs to the peptidase M20A family. DapE subfamily. As to quaternary structure, homodimer. Requires Zn(2+) as cofactor. The cofactor is Co(2+).

It catalyses the reaction N-succinyl-(2S,6S)-2,6-diaminopimelate + H2O = (2S,6S)-2,6-diaminopimelate + succinate. Its pathway is amino-acid biosynthesis; L-lysine biosynthesis via DAP pathway; LL-2,6-diaminopimelate from (S)-tetrahydrodipicolinate (succinylase route): step 3/3. Functionally, catalyzes the hydrolysis of N-succinyl-L,L-diaminopimelic acid (SDAP), forming succinate and LL-2,6-diaminopimelate (DAP), an intermediate involved in the bacterial biosynthesis of lysine and meso-diaminopimelic acid, an essential component of bacterial cell walls. The sequence is that of Succinyl-diaminopimelate desuccinylase from Burkholderia orbicola (strain MC0-3).